We begin with the raw amino-acid sequence, 322 residues long: Sideroflexin-2 (322 aa).

Met-1 carries the post-translational modification N-acetylmethionine. 5 helical membrane-spanning segments follow: residues 100-122 (MIIT…WQWV), 142-164 (SVRQ…AVGM), 174-192 (LVGR…CVNI), 228-250 (VVIS…MERL), and 265-287 (PLQV…GLFP).

The protein belongs to the sideroflexin family. As to expression, widely expressed, highest levels in kidney, liver, and pancreas.

The protein resides in the mitochondrion inner membrane. It is found in the mitochondrion outer membrane. It carries out the reaction L-serine(in) = L-serine(out). Mitochondrial amino-acid transporter that mediates transport of serine into mitochondria. Involved in mitochondrial iron homeostasis by regulating heme biosynthesis. The chain is Sideroflexin-2 from Homo sapiens (Human).